Consider the following 135-residue polypeptide: Large ribosomal subunit protein uL16 (135 aa).

The protein belongs to the universal ribosomal protein uL16 family. Part of the 50S ribosomal subunit.

Functionally, binds 23S rRNA and is also seen to make contacts with the A and possibly P site tRNAs. In Desulfatibacillum aliphaticivorans, this protein is Large ribosomal subunit protein uL16.